The primary structure comprises 700 residues: Elongation factor G (700 aa).

Positions 8-290 (ERYRNIGISA…AVIDYLPSPV (283 aa)) constitute a tr-type G domain. GTP is bound by residues 17–24 (AHIDAGKT), 88–92 (DTPGH), and 142–145 (NKMD).

This sequence belongs to the TRAFAC class translation factor GTPase superfamily. Classic translation factor GTPase family. EF-G/EF-2 subfamily.

Its subcellular location is the cytoplasm. In terms of biological role, catalyzes the GTP-dependent ribosomal translocation step during translation elongation. During this step, the ribosome changes from the pre-translocational (PRE) to the post-translocational (POST) state as the newly formed A-site-bound peptidyl-tRNA and P-site-bound deacylated tRNA move to the P and E sites, respectively. Catalyzes the coordinated movement of the two tRNA molecules, the mRNA and conformational changes in the ribosome. The polypeptide is Elongation factor G (Leptothrix cholodnii (strain ATCC 51168 / LMG 8142 / SP-6) (Leptothrix discophora (strain SP-6))).